Here is a 461-residue protein sequence, read N- to C-terminus: MIKVAILGKPNVGKSSLFNRILRERDAIVSEKAGTTRDIKKREVSLDDDLEEIVLLDTGGLEERDELFNKVKEKALEVAKEADLVLYMVDGKTIPDEEEIKYFRNLQKLGKHIILVVNKIDNDKMMEKVYDFYELGADEIFPISVSHNRGVGKLIERIKKFVPKKPKTFEVSEFEQEIPLEDLLVAEENEENLEELKEIKVAIVGRVNVGKSSLLNALVGEERAIVSDVDGTTIDPIDENIYHDGWNITFVDTAGIRRRSKIKDIEKYALLRTEKVLEEADIAILVIDAKEGIVELDEKIGGLIDKHKNGVIIVANKWDENAEEFHKFRKEVYYRFKYLYFAPFLAVSAKTGRNIDKLKDEIIRVYKNYSKRIPTATLNKWIEEATIRHHLPTDIGGKEVKIFYATQYKTKPPTIALIMNRNKLHFSYRRYLVNFLRKKEDFEGTPIIFVARKKGEKHEEA.

EngA-type G domains are found at residues 2–166 (IKVA…PKKP) and 199–370 (IKVA…KNYS). GTP is bound by residues 8–15 (GKPNVGKS), 57–61 (DTGGL), 118–121 (NKID), 205–212 (GRVNVGKS), 252–256 (DTAGI), and 316–319 (NKWD). The KH-like domain occupies 371 to 455 (KRIPTATLNK…PIIFVARKKG (85 aa)).

The protein belongs to the TRAFAC class TrmE-Era-EngA-EngB-Septin-like GTPase superfamily. EngA (Der) GTPase family. In terms of assembly, associates with the 50S ribosomal subunit.

GTPase that plays an essential role in the late steps of ribosome biogenesis. This Nautilia profundicola (strain ATCC BAA-1463 / DSM 18972 / AmH) protein is GTPase Der.